Here is a 143-residue protein sequence, read N- to C-terminus: Brain ribonuclease (143 aa).

The interval 1–21 (KESAAAKFRRQHMDSGSSSSG) is disordered. Residues K7 and R10 each coordinate substrate. H12 (proton acceptor) is an active-site residue. 4 cysteine pairs are disulfide-bonded: C26–C84, C40–C95, C58–C110, and C65–C72. Position 41–45 (41–45 (KPVNT)) interacts with substrate. N62 carries N-linked (GlcNAc...) asparagine glycosylation. Residues K66 and R85 each coordinate substrate. Residue H119 is the Proton donor of the active site. O-linked (GalNAc...) threonine glycosylation is present at T129. The O-linked (GalNAc...) serine glycan is linked to S133.

Belongs to the pancreatic ribonuclease family.

Its subcellular location is the secreted. The protein is Brain ribonuclease (BRN) of Ovis aries (Sheep).